Reading from the N-terminus, the 140-residue chain is Protein SNA4 (140 aa).

Over 1–8 the chain is Cytoplasmic; the sequence is MCCYCVCC. Residues cysteine 2, cysteine 3, cysteine 5, cysteine 7, and cysteine 8 are each lipidated (S-palmitoyl cysteine). A helical transmembrane segment spans residues 9–29; the sequence is TVSDFILYIVAFFFPPAAVLL. At 30–41 the chain is on the vacuolar side; it reads RSGPCSSDFLLN. Residues 42–62 traverse the membrane as a helical segment; that stretch reads VLLTLLGFLPGMLHAFYYITI. Topologically, residues 63 to 140 are cytoplasmic; the sequence is TSPLRNAEYV…LVESPPPYVP (78 aa). Positions 84 to 140 are disordered; the sequence is RNVPSNRPQNSQTPQNRPQQGSSARNVYPSVETPLLQGAAPHDNKQSLVESPPPYVP. Residues 85 to 108 are compositionally biased toward polar residues; the sequence is NVPSNRPQNSQTPQNRPQQGSSAR. Lysine 128 participates in a covalent cross-link: Glycyl lysine isopeptide (Lys-Gly) (interchain with G-Cter in ubiquitin). Serine 134 bears the Phosphoserine mark.

It belongs to the UPF0057 (PMP3) family.

Its subcellular location is the vacuole membrane. In Saccharomyces cerevisiae (strain ATCC 204508 / S288c) (Baker's yeast), this protein is Protein SNA4 (SNA4).